The chain runs to 395 residues: Acetylornithine aminotransferase (395 aa).

Pyridoxal 5'-phosphate contacts are provided by residues 117 to 118 (GA) and Phe-144. Position 147 (Arg-147) interacts with N(2)-acetyl-L-ornithine. 230–233 (DEVQ) is a pyridoxal 5'-phosphate binding site. Lys-259 is modified (N6-(pyridoxal phosphate)lysine). Residue Ser-285 participates in N(2)-acetyl-L-ornithine binding. Pyridoxal 5'-phosphate is bound at residue Thr-286.

It belongs to the class-III pyridoxal-phosphate-dependent aminotransferase family. ArgD subfamily. Homodimer. Pyridoxal 5'-phosphate serves as cofactor.

It localises to the cytoplasm. It catalyses the reaction N(2)-acetyl-L-ornithine + 2-oxoglutarate = N-acetyl-L-glutamate 5-semialdehyde + L-glutamate. Its pathway is amino-acid biosynthesis; L-arginine biosynthesis; N(2)-acetyl-L-ornithine from L-glutamate: step 4/4. The polypeptide is Acetylornithine aminotransferase (Methanosarcina mazei (strain ATCC BAA-159 / DSM 3647 / Goe1 / Go1 / JCM 11833 / OCM 88) (Methanosarcina frisia)).